We begin with the raw amino-acid sequence, 147 residues long: D-aminoacyl-tRNA deacylase (147 aa).

The short motif at 136 to 137 is the Gly-cisPro motif, important for rejection of L-amino acids element; that stretch reads GP.

It belongs to the DTD family. Homodimer.

Its subcellular location is the cytoplasm. It catalyses the reaction glycyl-tRNA(Ala) + H2O = tRNA(Ala) + glycine + H(+). It carries out the reaction a D-aminoacyl-tRNA + H2O = a tRNA + a D-alpha-amino acid + H(+). Functionally, an aminoacyl-tRNA editing enzyme that deacylates mischarged D-aminoacyl-tRNAs. Also deacylates mischarged glycyl-tRNA(Ala), protecting cells against glycine mischarging by AlaRS. Acts via tRNA-based rather than protein-based catalysis; rejects L-amino acids rather than detecting D-amino acids in the active site. By recycling D-aminoacyl-tRNA to D-amino acids and free tRNA molecules, this enzyme counteracts the toxicity associated with the formation of D-aminoacyl-tRNA entities in vivo and helps enforce protein L-homochirality. This is D-aminoacyl-tRNA deacylase from Streptococcus uberis (strain ATCC BAA-854 / 0140J).